The chain runs to 512 residues: Cytochrome P450 monooxygenase paxQ (512 aa).

Transmembrane regions (helical) follow at residues 3 to 23 (FVLS…LVSI) and 35 to 55 (LQIP…ISAL). Heme is bound at residue Cys-453.

It belongs to the cytochrome P450 family. Heme serves as cofactor.

The protein resides in the membrane. The protein operates within secondary metabolite biosynthesis. In terms of biological role, cytochrome P450 monooxygenase; part of the gene cluster that mediates the biosynthesis of paxilline, a mycotoxin that acts as an inhibitor of mammalian maxi-K channels. PaxG, the geranylgeranyl diphosphate (GGPP) synthase is proposed to catalyze the first step in paxilline biosynthesis. Condensation of indole-3-glycerol phosphate with GGPP by paxC then forms 3-geranylgeranylindole (3-GGI), followed by epoxidation and cyclization of this intermediate (by paxM and paxB) to form paspaline. Paspaline is subsequently converted to 13-desoxypaxilline by paxP, the latter being then converted to paxilline by paxQ. Finally paxilline can be mono- and di-prenylated by paxD. PaxQ can also utilized beta-paxitriol and alpha-PC-M6 as substrates converting them to alpha-paxitriol. This is Cytochrome P450 monooxygenase paxQ from Penicillium paxilli.